A 54-amino-acid chain; its full sequence is U-reduvitoxin-Pr7a (54 aa).

The first 23 residues, 1 to 23 (MDFLRILLFVLACIMALFTSAIA), serve as a signal peptide directing secretion. 3 disulfides stabilise this stretch: cysteine 26–cysteine 41, cysteine 33–cysteine 46, and cysteine 40–cysteine 53.

It belongs to the venom Ptu1-like knottin family. As to expression, expressed by the venom gland.

It localises to the secreted. In terms of biological role, binds reversibly and blocks P/Q-type voltage-gated calcium channels (Cav). The chain is U-reduvitoxin-Pr7a from Platymeris rhadamanthus (Red spot assassin bug).